The following is a 358-amino-acid chain: DNA polymerase IV (358 aa).

The 182-residue stretch at 4–185 folds into the UmuC domain; the sequence is IIHIDMDCYF…LSLRKIPGVG (182 aa). Mg(2+)-binding residues include Asp8 and Asp103. Residue Glu104 is part of the active site.

Belongs to the DNA polymerase type-Y family. In terms of assembly, monomer. Mg(2+) serves as cofactor.

The protein localises to the cytoplasm. It carries out the reaction DNA(n) + a 2'-deoxyribonucleoside 5'-triphosphate = DNA(n+1) + diphosphate. Functionally, poorly processive, error-prone DNA polymerase involved in untargeted mutagenesis. Copies undamaged DNA at stalled replication forks, which arise in vivo from mismatched or misaligned primer ends. These misaligned primers can be extended by PolIV. Exhibits no 3'-5' exonuclease (proofreading) activity. May be involved in translesional synthesis, in conjunction with the beta clamp from PolIII. In Shewanella sp. (strain W3-18-1), this protein is DNA polymerase IV.